Here is a 398-residue protein sequence, read N- to C-terminus: Neuroplastin (398 aa).

A signal peptide spans 1–28; that stretch reads MSGSSLPSALALSLLLVSGSLLPGPGAA. 3 Ig-like domains span residues 29-134, 148-235, and 238-329; these read QNAG…PSIT, PRIV…IEVK, and PDIT…SVVT. The Extracellular portion of the chain corresponds to 29-339; the sequence is QNAGFVKSPM…VLRVRSHLAP (311 aa). Cys52 and Cys116 are disulfide-bonded. A narpin; mediates binding with FGFR1 and has antidepressant-like activity region spans residues 149–161; the sequence is RIVTSEEVIIRDS. Cys170 and Cys218 form a disulfide bridge. 6 N-linked (GlcNAc...) asparagine glycosylation sites follow: Asn171, Asn197, Asn229, Asn284, Asn296, and Asn317. Cysteines 259 and 316 form a disulfide. The helical transmembrane segment at 340–360 threads the bilayer; it reads LWPFLGILAEIIILVVIIVVY. Over 361–398 the chain is Cytoplasmic; it reads EKRKRPDEVPDDDEPAGPMKTNSTNNHKDKNLRQRNTN. The segment at 365–398 is disordered; that stretch reads RPDEVPDDDEPAGPMKTNSTNNHKDKNLRQRNTN.

Interacts with ATP2B1; this interaction stabilizes ATP2B1 and increases ATPase activity; this interaction controls T cell calcium homeostasis following T cell activation. Interacts with XKR8; promoting its localization at the cell membrane. Isoform 1 is ubiquitously expressed. Isoform 2 is expressed in brain cortex and cerebellum (at protein level).

The protein localises to the cell membrane. It is found in the postsynaptic density. Functionally, probable homophilic and heterophilic cell adhesion molecule involved in long term potentiation at hippocampal excitatory synapses through activation of p38MAPK. May also regulate neurite outgrowth by activating the FGFR1 signaling pathway. May play a role in synaptic plasticity. Also acts as a chaperone for ATP2B1; stabilizes ATP2B1 and increases its ATPase activity. Promotes localization of XKR8 at the cell membrane. The sequence is that of Neuroplastin (NPTN) from Homo sapiens (Human).